The sequence spans 45 residues: Large ribosomal subunit protein bL34 (45 aa).

A disordered region spans residues 1–27 (MTKRTLGGTSRKRKRVSGFRVRMRTHT). Positions 10–27 (SRKRKRVSGFRVRMRTHT) are enriched in basic residues.

This sequence belongs to the bacterial ribosomal protein bL34 family.

The protein is Large ribosomal subunit protein bL34 of Prochlorococcus marinus (strain MIT 9211).